Reading from the N-terminus, the 371-residue chain is O-phospho-L-seryl-tRNA:Cys-tRNA synthase 1 (371 aa).

Pyridoxal 5'-phosphate-binding positions include 78-79 (AR), Asn183, and 206-208 (SGH). Lys209 is subject to N6-(pyridoxal phosphate)lysine.

Belongs to the SepCysS family. As to quaternary structure, homodimer. Probably interacts with SepRS. Requires pyridoxal 5'-phosphate as cofactor.

The enzyme catalyses O-phospho-L-seryl-tRNA(Cys) + hydrogen sulfide + H(+) = L-cysteinyl-tRNA(Cys) + phosphate. Functionally, converts O-phospho-L-seryl-tRNA(Cys) (Sep-tRNA(Cys)) to L-cysteinyl-tRNA(Cys) (Cys-tRNA(Cys)). The polypeptide is O-phospho-L-seryl-tRNA:Cys-tRNA synthase 1 (Archaeoglobus fulgidus (strain ATCC 49558 / DSM 4304 / JCM 9628 / NBRC 100126 / VC-16)).